A 545-amino-acid polypeptide reads, in one-letter code: E3 ubiquitin-protein ligase ipaH9.8 (545 aa).

The tract at residues 1–242 is interaction with target proteins; the sequence is MLPINNNFSL…YHGPRIYFSM (242 aa). 8 LRR repeats span residues 57–77, 78–99, 100–117, 118–139, 140–157, 158–179, 182–203, and 205–228; these read NSDE…NLPA, QITL…PVTL, KKLY…VLPP, ALES…PDSL, LTMN…SLPQ, ALKN…SEGN, VVRE…ILNL, and NECS…QRLT. Positions 243–250 are linker; the sequence is SDGQQNTL. Positions 251-545 are E3 ubiquitin-protein ligase catalytic domain; sequence HRPLADAVTA…PENGSQLHHS (295 aa). In terms of domain architecture, NEL spans 253–545; the sequence is PLADAVTAWF…PENGSQLHHS (293 aa). The Glycyl thioester intermediate role is filled by Cys-337.

This sequence belongs to the LRR-containing bacterial E3 ligase family. As to quaternary structure, also interacts with human and mouse U2AF1 (U2AF35). Autoubiquitinated (in vitro). Ubiquitinated in the presence of host E1 ubiquitin-activating enzyme, E2 ubiquitin-conjugating enzyme and ubiquitin.

It localises to the secreted. Its subcellular location is the host cytoplasm. The protein resides in the host nucleus. The enzyme catalyses S-ubiquitinyl-[E2 ubiquitin-conjugating enzyme]-L-cysteine + [acceptor protein]-L-lysine = [E2 ubiquitin-conjugating enzyme]-L-cysteine + N(6)-ubiquitinyl-[acceptor protein]-L-lysine.. The protein operates within protein modification; protein ubiquitination. Exists in an autoinhibited state in the absence of substrate protein, due to interactions of the leucine-rich repeats with NEL domain. Is activated upon binding to a substrate protein. Its function is as follows. Effector E3 ubiquitin ligase that interferes with host's ubiquitination pathway and modulates the acute inflammatory responses, thus facilitating bacterial colonization within the host cell. Interacts with IKBKG (NEMO) and TNIP1 (ABIN-1), a ubiquitin-binding adapter protein, which results in TNIP1-dependent 'Lys-27'-linked polyubiquitination of IKBKG. Consequently, polyubiquitinated IKBKG undergoes proteasome-dependent degradation, which perturbs NF-kappa-B activation during bacterial infection. Mediates polyubiquitination of host U2AF1, leading to its proteasomal degradation. Catalyzes 'Lys-48'-linked polyubiquitination and subsequent degradation of a subset of host guanylate-binding proteins (GBP1, GBP2, GBP4 and GBP6), thereby suppressing host cell defense. In contrast, host GBP3 and GBP7 are not ubiquitinated by IpaH9.8. Uses UBE2D2 (UBCH5B) as an E2 ubiquitin-conjugating enzyme. The chain is E3 ubiquitin-protein ligase ipaH9.8 from Shigella flexneri.